A 506-amino-acid polypeptide reads, in one-letter code: Maturase K (506 aa).

Belongs to the intron maturase 2 family. MatK subfamily.

The protein localises to the plastid. It is found in the chloroplast. Its function is as follows. Usually encoded in the trnK tRNA gene intron. Probably assists in splicing its own and other chloroplast group II introns. This Trifolium lupinaster (Lupine clover) protein is Maturase K.